The chain runs to 2226 residues: DNA polymerase epsilon catalytic subunit A (2226 aa).

Positions 1240–1265 (RVSKVTSRKRRNGKANNVSDSEEEER) are disordered. Zn(2+) is bound by residues cysteine 2112, cysteine 2115, cysteine 2134, and cysteine 2137. A CysA-type zinc finger spans residues 2112–2137 (CDYCNYIRDIDFCRDEQKNIWNCSNC). [4Fe-4S] cluster contacts are provided by cysteine 2168, cysteine 2171, cysteine 2183, and cysteine 2185. Residues 2168 to 2185 (CSKCHQIKSDNMSEYCKC) carry the CysB motif motif.

This sequence belongs to the DNA polymerase type-B family. In terms of assembly, heterotetramer. Consists of 4 subunits: POL2, DPB2, DPB3 and DPB4. The cofactor is [4Fe-4S] cluster.

It localises to the nucleus. It carries out the reaction DNA(n) + a 2'-deoxyribonucleoside 5'-triphosphate = DNA(n+1) + diphosphate. In terms of biological role, DNA polymerase II participates in chromosomal DNA replication. The sequence is that of DNA polymerase epsilon catalytic subunit A (POL2) from Debaryomyces hansenii (strain ATCC 36239 / CBS 767 / BCRC 21394 / JCM 1990 / NBRC 0083 / IGC 2968) (Yeast).